Consider the following 72-residue polypeptide: Small proline-rich protein 2D (72 aa).

The span at 1–11 (MSYQQQQCKQP) shows a compositional bias: low complexity. Residues 1-20 (MSYQQQQCKQPCQPPPVCPT) are disordered. 3 consecutive repeat copies span residues 21 to 29 (PKCPEPCPP), 30 to 38 (PKCPEPCPS), and 39 to 47 (PKCPQPCPP). A 3 X 9 AA tandem repeats of P-K-C-P-[EQ]-P-C-P-[PS] region spans residues 21 to 47 (PKCPEPCPPPKCPEPCPSPKCPQPCPP). Pro residues-rich tracts occupy residues 33-47 (PEPC…PCPP) and 56-72 (PVTP…PKSK). The tract at residues 33–72 (PEPCPSPKCPQPCPPQQCQQKYPPVTPSPPCQPKCPPKSK) is disordered.

It belongs to the cornifin (SPRR) family.

Its subcellular location is the cytoplasm. Cross-linked envelope protein of keratinocytes. It is a keratinocyte protein that first appears in the cell cytosol, but ultimately becomes cross-linked to membrane proteins by transglutaminase. All that results in the formation of an insoluble envelope beneath the plasma membrane. The chain is Small proline-rich protein 2D (SPRR2D) from Homo sapiens (Human).